A 495-amino-acid polypeptide reads, in one-letter code: MTTATPVKTEYEAIIGLETHCQLNTTSKIFCNCSTEFDSPPNTNVCPICLGYPGVLPVLNEEVLASAVKLGLALNAKIAPYSKFDRKQYFYPDLPKNYQISQFDLPIVEHGSLEIELVDKKSKEVTRKTIGITRLHMEEDAGKLVHAGSDRLAGSTHSLVDFNRTGVPLLEIVSEPDIRSGQEAAEYAQELRRLVRYLGISDGNMQEGSLRCDVNISVRPVGQKEFGTKVEIKNMNSFSAIQKAIEYEIERQIEAVENGDPIYQETRLWDESNQETISMRKKEGSSDYRYFPEPDLPPLEVSEEKLNAWKQELPELPAQKRKRYEEALGLSAYDARVLTDDREVAEYYETAVNTGADAKLVANWVTQDIAAYLNNSKLSIIEIALKPDSLGELVQLIEKGTISGKIAKEILPELLEKGGSPKKIVESKGMTQISDPAEIEKVIEALMEANPSEVEKYRGGKKKLKGFFVGQVMKETGGRADPKLTNQLAEKLLNG.

Belongs to the GatB/GatE family. GatB subfamily. Heterotrimer of A, B and C subunits.

It carries out the reaction L-glutamyl-tRNA(Gln) + L-glutamine + ATP + H2O = L-glutaminyl-tRNA(Gln) + L-glutamate + ADP + phosphate + H(+). The enzyme catalyses L-aspartyl-tRNA(Asn) + L-glutamine + ATP + H2O = L-asparaginyl-tRNA(Asn) + L-glutamate + ADP + phosphate + 2 H(+). Functionally, allows the formation of correctly charged Asn-tRNA(Asn) or Gln-tRNA(Gln) through the transamidation of misacylated Asp-tRNA(Asn) or Glu-tRNA(Gln) in organisms which lack either or both of asparaginyl-tRNA or glutaminyl-tRNA synthetases. The reaction takes place in the presence of glutamine and ATP through an activated phospho-Asp-tRNA(Asn) or phospho-Glu-tRNA(Gln). In Crocosphaera subtropica (strain ATCC 51142 / BH68) (Cyanothece sp. (strain ATCC 51142)), this protein is Aspartyl/glutamyl-tRNA(Asn/Gln) amidotransferase subunit B.